Consider the following 267-residue polypeptide: GTP cyclohydrolase MptA (267 aa).

It belongs to the GTP cyclohydrolase IV family. As to quaternary structure, homodimer. It depends on Fe(2+) as a cofactor.

The enzyme catalyses GTP + H2O = 7,8-dihydroneopterin 2',3'-cyclic phosphate + formate + diphosphate + H(+). The protein operates within cofactor biosynthesis; 5,6,7,8-tetrahydromethanopterin biosynthesis. Its function is as follows. Converts GTP to 7,8-dihydro-D-neopterin 2',3'-cyclic phosphate, the first intermediate in the biosynthesis of coenzyme methanopterin. The sequence is that of GTP cyclohydrolase MptA from Thermococcus kodakarensis (strain ATCC BAA-918 / JCM 12380 / KOD1) (Pyrococcus kodakaraensis (strain KOD1)).